The chain runs to 218 residues: N-(5'-phosphoribosyl)anthranilate isomerase (218 aa).

The protein belongs to the TrpF family.

It catalyses the reaction N-(5-phospho-beta-D-ribosyl)anthranilate = 1-(2-carboxyphenylamino)-1-deoxy-D-ribulose 5-phosphate. It participates in amino-acid biosynthesis; L-tryptophan biosynthesis; L-tryptophan from chorismate: step 3/5. The sequence is that of N-(5'-phosphoribosyl)anthranilate isomerase from Bordetella pertussis (strain Tohama I / ATCC BAA-589 / NCTC 13251).